Here is a 291-residue protein sequence, read N- to C-terminus: Venom metalloproteinase inhibitor DM43 (291 aa).

Ig-like V-type domains lie at 22 to 79 (TNVT…ILTS) and 114 to 171 (GLET…PASA). Asparagine 23 carries N-linked (GlcNAc...) asparagine glycosylation. 2 disulfides stabilise this stretch: cysteine 28–cysteine 74 and cysteine 121–cysteine 163. N-linked (GlcNAc...) asparagine glycosylation is found at asparagine 156, asparagine 160, and asparagine 175. The Ig-like V-type 3 domain maps to 191–288 (PKANFYILND…DSNVLELDLS (98 aa)). Cysteine 213 and cysteine 265 are oxidised to a cystine.

As to quaternary structure, homodimer. Post-translationally, N-glycosylated. Blood and milk.

In terms of biological role, metalloproteinase inhibitor. This chain is Venom metalloproteinase inhibitor DM43, found in Didelphis marsupialis (Southern opossum).